A 331-amino-acid chain; its full sequence is UPF0324 membrane protein SA0329 (331 aa).

11 consecutive transmembrane segments (helical) span residues 9–26 (FMIG…SFLA), 31–48 (ILDK…AILY), 69–88 (LLRF…DIIG), 93–115 (LLAI…NKLL), 122–144 (ALLL…APIF), 154–176 (SIGI…YAIF), 183–202 (YGAW…LAGG), 217–234 (LGRV…ILIM), 247–269 (ISIP…VTIP), 273–295 (LNIL…GLNV), and 308–330 (LMTI…HWLY).

This sequence belongs to the UPF0324 family.

The protein resides in the cell membrane. In Staphylococcus aureus (strain N315), this protein is UPF0324 membrane protein SA0329.